The following is a 434-amino-acid chain: Protein FAM83A (434 aa).

The tract at residues 1 to 298 (MSRSRHLGKI…LYASSKPVMG (298 aa)) is DUF1669. Positions 76 to 97 (REPPCPPDTLGGAEAGPKGLDS) are disordered. Residues S301, S327, S348, and S357 each carry the phosphoserine modification. Residues 308-399 (VPPGAAPANG…HDGPPAAVYS (92 aa)) are disordered. 2 stretches are compositionally biased toward low complexity: residues 320–332 (SSSS…RTSS) and 348–357 (SVSASSGPCS). Over residues 358–369 (PAAPHPPPPPRF) the composition is skewed to pro residues.

This sequence belongs to the FAM83 family. Directly interacts (via DUF1669) with casein kinase isoforms CSNK1A1, CSNK1A1L, CSNK1D and CSNK1E. In terms of processing, phosphorylated upon EGFR activation in a breast cancer cell line.

It is found in the cytoplasm. Involved in mitochondrial maintenance during adipogenesis. May be acting by playing a role in the maintenance of normal mitochondrial function. In Homo sapiens (Human), this protein is Protein FAM83A.